A 230-amino-acid chain; its full sequence is Sugar fermentation stimulation protein homolog (230 aa).

It belongs to the SfsA family.

This is Sugar fermentation stimulation protein homolog from Pelobacter propionicus (strain DSM 2379 / NBRC 103807 / OttBd1).